The primary structure comprises 545 residues: CTP synthase (545 aa).

An amidoligase domain region spans residues M1–L266. Residue S14 coordinates CTP. A UTP-binding site is contributed by S14. Residues S15–I20 and D72 each bind ATP. D72 and E140 together coordinate Mg(2+). Residues D147–E149, K187–Q192, and K223 each bind CTP. UTP-binding positions include K187–Q192 and K223. An ATP-binding site is contributed by K239–V241. The 253-residue stretch at V291–N543 folds into the Glutamine amidotransferase type-1 domain. G352 contacts L-glutamine. Catalysis depends on C379, which acts as the Nucleophile; for glutamine hydrolysis. L-glutamine-binding positions include L380–Q383, E403, and R471. Residues H516 and E518 contribute to the active site.

Belongs to the CTP synthase family. As to quaternary structure, homotetramer.

It carries out the reaction UTP + L-glutamine + ATP + H2O = CTP + L-glutamate + ADP + phosphate + 2 H(+). It catalyses the reaction L-glutamine + H2O = L-glutamate + NH4(+). The catalysed reaction is UTP + NH4(+) + ATP = CTP + ADP + phosphate + 2 H(+). Its pathway is pyrimidine metabolism; CTP biosynthesis via de novo pathway; CTP from UDP: step 2/2. With respect to regulation, allosterically activated by GTP, when glutamine is the substrate; GTP has no effect on the reaction when ammonia is the substrate. The allosteric effector GTP functions by stabilizing the protein conformation that binds the tetrahedral intermediate(s) formed during glutamine hydrolysis. Inhibited by the product CTP, via allosteric rather than competitive inhibition. Catalyzes the ATP-dependent amination of UTP to CTP with either L-glutamine or ammonia as the source of nitrogen. Regulates intracellular CTP levels through interactions with the four ribonucleotide triphosphates. The sequence is that of CTP synthase from Buchnera aphidicola subsp. Acyrthosiphon pisum (strain 5A).